Here is a 361-residue protein sequence, read N- to C-terminus: sn-glycerol-3-phosphate import ATP-binding protein UgpC (361 aa).

One can recognise an ABC transporter domain in the interval 4–235 (VTLRNVRKTY…PATTFVASFI (232 aa)). Position 37 to 44 (37 to 44 (GPSGCGKS)) interacts with ATP.

It belongs to the ABC transporter superfamily. sn-glycerol-3-phosphate importer (TC 3.A.1.1.3) family. The complex is composed of two ATP-binding proteins (UgpC), two transmembrane proteins (UgpA and UgpE) and a solute-binding protein (UgpB).

The protein resides in the cell inner membrane. It carries out the reaction sn-glycerol 3-phosphate(out) + ATP + H2O = sn-glycerol 3-phosphate(in) + ADP + phosphate + H(+). Functionally, part of the ABC transporter complex UgpBAEC involved in sn-glycerol-3-phosphate (G3P) import. Responsible for energy coupling to the transport system. This is sn-glycerol-3-phosphate import ATP-binding protein UgpC from Rhodopseudomonas palustris (strain BisA53).